We begin with the raw amino-acid sequence, 129 residues long: Fluoride-specific ion channel FluC 2 (129 aa).

A run of 4 helical transmembrane segments spans residues 3–23, 32–52, 59–79, and 90–110; these read FLYV…MNLW, ATLA…QFLA, LVIL…FSAF, and GAWL…LIMV. Residues Gly71 and Thr74 each contribute to the Na(+) site.

Belongs to the fluoride channel Fluc/FEX (TC 1.A.43) family.

It is found in the cell membrane. The enzyme catalyses fluoride(in) = fluoride(out). With respect to regulation, na(+) is not transported, but it plays an essential structural role and its presence is essential for fluoride channel function. In terms of biological role, fluoride-specific ion channel. Important for reducing fluoride concentration in the cell, thus reducing its toxicity. In Listeria monocytogenes serotype 4b (strain F2365), this protein is Fluoride-specific ion channel FluC 2.